The following is a 572-amino-acid chain: Arginine--tRNA ligase (572 aa).

The 'HIGH' region motif lies at 122-132; that stretch reads PNLAKEMHVGH.

This sequence belongs to the class-I aminoacyl-tRNA synthetase family. As to quaternary structure, monomer.

The protein resides in the cytoplasm. It carries out the reaction tRNA(Arg) + L-arginine + ATP = L-arginyl-tRNA(Arg) + AMP + diphosphate. In Neisseria gonorrhoeae (strain ATCC 700825 / FA 1090), this protein is Arginine--tRNA ligase.